Consider the following 225-residue polypeptide: E3 ubiquitin-protein ligase ATL76 (225 aa).

Residues Leu-59 to Ile-79 form a helical membrane-spanning segment. An RING-type; atypical zinc finger spans residues Cys-135–Arg-177.

Belongs to the RING-type zinc finger family. ATL subfamily.

The protein resides in the membrane. It carries out the reaction S-ubiquitinyl-[E2 ubiquitin-conjugating enzyme]-L-cysteine + [acceptor protein]-L-lysine = [E2 ubiquitin-conjugating enzyme]-L-cysteine + N(6)-ubiquitinyl-[acceptor protein]-L-lysine.. Its pathway is protein modification; protein ubiquitination. Its function is as follows. E3 ubiquitin-protein ligase able to catalyze polyubiquitination with ubiquitin-conjugating enzyme E2 UBC8 in vitro. In Arabidopsis thaliana (Mouse-ear cress), this protein is E3 ubiquitin-protein ligase ATL76 (ATL76).